Here is a 746-residue protein sequence, read N- to C-terminus: Mediator of RNA polymerase II transcription subunit 25 (746 aa).

The interaction with the Mediator complex stretch occupies residues 1 to 226 (MVPGSEGPAR…PRHMVLVRGL (226 aa)). 2 disordered regions span residues 233-273 (GSAP…QQYQ) and 298-390 (GLGP…PALG). A compositionally biased stretch (pro residues) spans 238 to 251 (PLQPKQPVPLPPAA). Positions 252–262 (PAGATLSTAPQ) are enriched in low complexity. Over residues 329-342 (PPGPPGAPKPPPAS) the composition is skewed to pro residues. The segment covering 343–354 (QPSLVSTVAPGP) has biased composition (low complexity). An interaction with VP16 region spans residues 389–543 (LGGQQSVSNK…VNGIRQVITN (155 aa)). The segment at 395–545 (VSNKLLAWSG…GIRQVITNHK (151 aa)) is interaction with CREBBP. The disordered stretch occupies residues 548–746 (QQQKLEQQRG…MEDDILMDLI (199 aa)). 2 interaction with RARA regions span residues 563–652 (APPG…LLNP) and 639–706 (PGAN…WPAQ). A compositionally biased stretch (low complexity) spans 599-610 (AAAGQPQPQGAA). The span at 611–633 (PAPPGAPQGPPGAAPGPPPPGPL) shows a compositional bias: pro residues. Residues 645–649 (LRSLL) carry the LXXLL motif motif. Pro residues-rich tracts occupy residues 651 to 663 (NPPPPQTGVPPPQ), 672 to 682 (PGAPALLPPPH), and 690 to 701 (LGPPLLHPPPAQ). Residue arginine 724 is modified to Asymmetric dimethylarginine. Acidic residues predominate over residues 737 to 746 (MEDDILMDLI).

Belongs to the Mediator complex subunit 25 family. As to quaternary structure, component of the Mediator complex, which is composed of MED1, MED4, MED6, MED7, MED8, MED9, MED10, MED11, MED12, MED13, MED13L, MED14, MED15, MED16, MED17, MED18, MED19, MED20, MED21, MED22, MED23, MED24, MED25, MED26, MED27, MED29, MED30, MED31, CCNC, CDK8 and CDC2L6/CDK11. The MED12, MED13, CCNC and CDK8 subunits form a distinct module termed the CDK8 module. Mediator containing the CDK8 module is less active than Mediator lacking this module in supporting transcriptional activation. Individual preparations of the Mediator complex lacking one or more distinct subunits have been variously termed ARC, CRSP, DRIP, PC2, SMCC and TRAP. Interacts with CREBBP. Interacts with ESR1, GR, RARA, RXRA and THRB in a ligand-dependent fashion. Binds the Herpes simplex virus activator VP16.

It is found in the nucleus. Component of the Mediator complex, a coactivator involved in the regulated transcription of nearly all RNA polymerase II-dependent genes. Mediator functions as a bridge to convey information from gene-specific regulatory proteins to the basal RNA polymerase II transcription machinery. Mediator is recruited to promoters by direct interactions with regulatory proteins and serves as a scaffold for the assembly of a functional preinitiation complex with RNA polymerase II and the general transcription factors. Required for RARA/RXRA-mediated transcription. The polypeptide is Mediator of RNA polymerase II transcription subunit 25 (MED25) (Bos taurus (Bovine)).